The primary structure comprises 367 residues: Leucine-rich repeat-containing protein 28 (367 aa).

9 LRR repeats span residues Lys-16–Lys-36, His-42–Lys-63, Asn-66–Leu-87, Lys-89–Arg-111, Ala-112–Leu-133, Glu-135–Cys-156, Ser-158–Pro-180, Ser-181–Ser-202, and Glu-204–Lys-226.

The protein is Leucine-rich repeat-containing protein 28 (Lrrc28) of Mus musculus (Mouse).